Here is a 142-residue protein sequence, read N- to C-terminus: Large ribosomal subunit protein uL13 (142 aa).

This sequence belongs to the universal ribosomal protein uL13 family. Part of the 50S ribosomal subunit.

In terms of biological role, this protein is one of the early assembly proteins of the 50S ribosomal subunit, although it is not seen to bind rRNA by itself. It is important during the early stages of 50S assembly. This chain is Large ribosomal subunit protein uL13, found in Ruthia magnifica subsp. Calyptogena magnifica.